A 156-amino-acid chain; its full sequence is MPRKGPVPRREILPDPLYNSRLVARFINRLMYDGKKGAAEKIFYSALDTLAQKTGEEPLKAFEKAIENVKPHLEVKARRVGGATYQVPMEVRPDRQVSLSLRWLIAYSRSRGEKGMVSKLSAELLDAFNNRGGAVKKKEDTHRMAEANKAFAHYRW.

This sequence belongs to the universal ribosomal protein uS7 family. As to quaternary structure, part of the 30S ribosomal subunit. Contacts proteins S9 and S11.

Its function is as follows. One of the primary rRNA binding proteins, it binds directly to 16S rRNA where it nucleates assembly of the head domain of the 30S subunit. Is located at the subunit interface close to the decoding center, probably blocks exit of the E-site tRNA. This is Small ribosomal subunit protein uS7 from Nitratidesulfovibrio vulgaris (strain ATCC 29579 / DSM 644 / CCUG 34227 / NCIMB 8303 / VKM B-1760 / Hildenborough) (Desulfovibrio vulgaris).